A 187-amino-acid polypeptide reads, in one-letter code: Elongation factor P (187 aa).

This sequence belongs to the elongation factor P family.

It localises to the cytoplasm. The protein operates within protein biosynthesis; polypeptide chain elongation. In terms of biological role, involved in peptide bond synthesis. Stimulates efficient translation and peptide-bond synthesis on native or reconstituted 70S ribosomes in vitro. Probably functions indirectly by altering the affinity of the ribosome for aminoacyl-tRNA, thus increasing their reactivity as acceptors for peptidyl transferase. This chain is Elongation factor P, found in Corynebacterium glutamicum (strain R).